The chain runs to 148 residues: Ribonuclease H (148 aa).

One can recognise an RNase H type-1 domain in the interval 3-144 (AEETVEIFTD…ADALANRGIE (142 aa)). Mg(2+) contacts are provided by D12, E50, D72, and D136. A disordered region spans residues 129 to 148 (HPENERADALANRGIEELKG).

The protein belongs to the RNase H family. As to quaternary structure, monomer. Mg(2+) serves as cofactor.

The protein resides in the cytoplasm. The enzyme catalyses Endonucleolytic cleavage to 5'-phosphomonoester.. Endonuclease that specifically degrades the RNA of RNA-DNA hybrids. In Dechloromonas aromatica (strain RCB), this protein is Ribonuclease H.